Consider the following 318-residue polypeptide: Transaldolase (318 aa).

The Schiff-base intermediate with substrate role is filled by Lys-132.

The protein belongs to the transaldolase family. Type 1 subfamily. Homodimer.

The protein localises to the cytoplasm. The catalysed reaction is D-sedoheptulose 7-phosphate + D-glyceraldehyde 3-phosphate = D-erythrose 4-phosphate + beta-D-fructose 6-phosphate. Its pathway is carbohydrate degradation; pentose phosphate pathway; D-glyceraldehyde 3-phosphate and beta-D-fructose 6-phosphate from D-ribose 5-phosphate and D-xylulose 5-phosphate (non-oxidative stage): step 2/3. Transaldolase is important for the balance of metabolites in the pentose-phosphate pathway. The polypeptide is Transaldolase (Hamiltonella defensa subsp. Acyrthosiphon pisum (strain 5AT)).